The primary structure comprises 55 residues: Large ribosomal subunit protein bL33 (55 aa).

It belongs to the bacterial ribosomal protein bL33 family.

This is Large ribosomal subunit protein bL33 from Aliivibrio salmonicida (strain LFI1238) (Vibrio salmonicida (strain LFI1238)).